We begin with the raw amino-acid sequence, 378 residues long: Spermidine/putrescine import ATP-binding protein PotA (378 aa).

The 231-residue stretch at 18-248 (VQLAGIRKCF…PKNLFVAGFI (231 aa)) folds into the ABC transporter domain. 50–57 (GPSGCGKT) contributes to the ATP binding site.

Belongs to the ABC transporter superfamily. Spermidine/putrescine importer (TC 3.A.1.11.1) family. The complex is composed of two ATP-binding proteins (PotA), two transmembrane proteins (PotB and PotC) and a solute-binding protein (PotD).

It is found in the cell inner membrane. The enzyme catalyses ATP + H2O + polyamine-[polyamine-binding protein]Side 1 = ADP + phosphate + polyamineSide 2 + [polyamine-binding protein]Side 1.. In terms of biological role, part of the ABC transporter complex PotABCD involved in spermidine/putrescine import. Responsible for energy coupling to the transport system. In Shigella boydii serotype 4 (strain Sb227), this protein is Spermidine/putrescine import ATP-binding protein PotA.